A 507-amino-acid polypeptide reads, in one-letter code: MYVSRLLLFLAPLLVKGQLSGSVGPLTSVSSKSQTKTCNVLDYGAVADKSTDIGPALSSAWDECADGGVVYIPPGDYAIETWVKLSGGKACAIQLDGIIYRTGTDGGNMIMIEHTSDFEFFSSTSKGAFQGYGYEFHAKGSSDGPRILRLYDVSDFSVHDVALVDSPLFHFSMDTCSNGEVYNMAIRGGNMGGLDGIDVWSTNVWIHDVEVTNKDECVTVKSPSKNILVENIYCNWSGGCAMGSLGTDTDISDIVYRNVYTWKSNQMYMVKSNGGSGTVSNLVLENFIGHGNAYSLDIDSAWSSMSTIEGDGVELKNVTIRNWKGTEADGSQRGPIKVKCASGAPCTDVTVEDFAMWTESGDEQTYVCENAFGDGFCLADGDGTSTFTTTLTASAAPSGYSAPSMDADLETAFGTDSEIPIPTIPTSFYPGATPYSALAGASVSSSQVPAASSSAEAKFVASPATSSPTATSTAISSVDPVSAATTTATSHGHGKSHHKHQCRAHRH.

The N-terminal stretch at 1 to 21 (MYVSRLLLFLAPLLVKGQLSG) is a signal peptide. An intrachain disulfide couples cysteine 38 to cysteine 64. Aspartate 215 functions as the Proton donor in the catalytic mechanism. Cysteines 217 and 234 form a disulfide. An N-linked (GlcNAc...) asparagine glycan is attached at asparagine 235. The active site involves histidine 290. Asparagine 317 carries an N-linked (GlcNAc...) asparagine glycan. 2 disulfides stabilise this stretch: cysteine 340-cysteine 346 and cysteine 368-cysteine 377. Residues 462-491 (SPATSSPTATSTAISSVDPVSAATTTATSH) show a composition bias toward low complexity. The disordered stretch occupies residues 462–507 (SPATSSPTATSTAISSVDPVSAATTTATSHGHGKSHHKHQCRAHRH). A compositionally biased stretch (basic residues) spans 492–507 (GHGKSHHKHQCRAHRH).

It belongs to the glycosyl hydrolase 28 family.

It localises to the secreted. It carries out the reaction Endohydrolysis of alpha-D-GalA-(1-&gt;2)-alpha-L-Rha glycosidic bond in the rhamnogalacturonan I backbone with initial inversion of anomeric configuration releasing oligosaccharides with beta-D-GalA at the reducing end.. Its function is as follows. Pectinolytic enzymes consist of four classes of enzymes: pectine lyase, polygalacturonase, pectin methylesterase and rhamnogalacturonase. Hydrolyzes alpha-D-galacturonopyranosyl-(1,2)-alpha-L-rhamnopyranosyl linkages in the backbone of the hairy regions of pectins. Active against linseed rhamnogalacturonan. The sequence is that of Rhamnogalacturonase A (rhgA) from Emericella nidulans (strain FGSC A4 / ATCC 38163 / CBS 112.46 / NRRL 194 / M139) (Aspergillus nidulans).